We begin with the raw amino-acid sequence, 608 residues long: Coilin (608 aa).

Residues 134 to 272 are disordered; it reads KETGGYESES…RKKAKRQWLR (139 aa). The segment covering 141-155 has biased composition (acidic residues); that stretch reads SESEEDELEEEAEEF. The segment covering 161–179 has biased composition (basic residues); that stretch reads ASKKRKTSSKNQSTKRKKC. A Nuclear localization signal 1 motif is present at residues 163–170; that stretch reads KKRKTSSK. A Phosphoserine modification is found at Ser187. A compositionally biased stretch (polar residues) spans 211–228; the sequence is DVQSANNDEQNNDSTKPM. Positions 235–245 are enriched in basic and acidic residues; that stretch reads SQQEESKEHND. Positions 253–260 match the Nuclear localization signal 2 motif; the sequence is TKKTPSRS. Basic residues predominate over residues 256-269; sequence TPSRSARRKKAKRQ. Residues 410–510 form the Tudor; atypical domain; sequence YEQLVAYTGS…LLDVRSVKTS (101 aa). The interval 513-585 is disordered; the sequence is DSAEVAKSAL…KKGSSSGGSW (73 aa). The span at 558 to 585 shows a compositional bias: low complexity; it reads EALSAKKAALSQANNGWNKKGSSSGGSW.

This sequence belongs to the coilin family. As to quaternary structure, homooligomer. Interaction with RNA results in multimerization due to structural alteration in the NOD domain.

Its subcellular location is the nucleus. The protein localises to the cajal body. Probable component of nuclear coiled bodies, also known as Cajal bodies or CBs, which are involved in the modification and assembly of nucleoplasmic snRNPs. Required for CBs formation. Binds snRNAs and non-specific artificial RNA via the N-terminal part of the NOD domain and via the NLS2 region (212-282) of the IDD domain. The two sites are able to function independently and provide effective RNA-binding in a non-cooperative manner. The polypeptide is Coilin (Arabidopsis thaliana (Mouse-ear cress)).